The chain runs to 366 residues: Nucleoporin SEH1 (366 aa).

WD repeat units follow at residues 18-57 (AHRD…NWRR), 63-104 (CHGG…TEKD), 111-152 (QWIR…RIYE), 161-209 (RWNL…VIYE), 226-267 (DMPC…TAIL), and 290-329 (GDQR…QWVK).

Belongs to the WD repeat SEC13 family. As to quaternary structure, component of the nuclear pore complex (NPC). Probably part of the GATOR complex.

The protein localises to the nucleus. Its subcellular location is the nuclear pore complex. The protein resides in the lysosome membrane. In terms of biological role, probable component of the nuclear pore complex (NPC) which is involved in the trafficking of macromolecules between the cytoplasm and nucleus. Functionally, as a component of the GATOR complex may function in the amino acid-sensing branch of the TORC1 signaling pathway. This chain is Nucleoporin SEH1, found in Caenorhabditis briggsae.